The primary structure comprises 970 residues: Testis anion transporter 1 (970 aa).

At 1–95 (MAQLERSAIS…YRLKDWLLGD (95 aa)) the chain is on the cytoplasmic side. Residues 96-116 (LLAGISVGLVQVPQGLTLSLL) form a helical membrane-spanning segment. Over 117-119 (ARQ) the chain is Extracellular. A helical membrane pass occupies residues 120–140 (LIPPLNIAYAAFCSSVIYVIF). At 141 to 146 (GSCHQM) the chain is on the cytoplasmic side. A helical transmembrane segment spans residues 147–167 (SIGSFFLVSALLINVLKVSPF). The Extracellular portion of the chain corresponds to 168-202 (NNGQLVMGSFVKNEFSAPSYLMGYNKSLSVVATTT). Asn192 carries N-linked (GlcNAc...) asparagine glycosylation. The chain crosses the membrane as a helical span at residues 203–223 (FLTGIIQLIMGVLGLGFIATY). Residues 224–232 (LPESAMSAY) are Cytoplasmic-facing. Residues 233 to 253 (LAAVALHIMLSQLTFIFGIMI) form a helical membrane-spanning segment. Residues 254–270 (SFHAGPISFFYDIINYC) lie on the Extracellular side of the membrane. The helical transmembrane segment at 271–291 (VALPKANSTSILVFLTVVVAL) threads the bilayer. Residues 292–307 (RINKCIRISFNQYPIE) lie on the Cytoplasmic side of the membrane. A helical membrane pass occupies residues 308–328 (FPMELFLIIGFTVIANKISMA). The Extracellular segment spans residues 329–355 (TETSQTLIDMIPYSFLLPVTPDFSLLP). The helical transmembrane segment at 356–376 (KIILQAFSLSLVSSFLLIFLG) threads the bilayer. Over 377–392 (KKIASLHNYSVNSNQD) the chain is Cytoplasmic. Residues 393–413 (LIAIGLCNVVSSFFRSCVFTG) traverse the membrane as a helical segment. Residues 414 to 429 (AIARTIIQDKSGGRQQ) lie on the Extracellular side of the membrane. The helical transmembrane segment at 430–450 (FASLVGAGVMLLLMVKMGHFF) threads the bilayer. Topologically, residues 451-452 (YT) are cytoplasmic. The helical transmembrane segment at 453-473 (LPNAVLAGIILSNVIPYLETI) threads the bilayer. Residues 474 to 497 (SNLPSLWRQDQYDCALWMMTFSSS) lie on the Extracellular side of the membrane. Residues 498-518 (IFLGLDIGLIISVVSAFFITT) traverse the membrane as a helical segment. Over 519-970 (VRSHRAKILL…SPEGNSNEDV (452 aa)) the chain is Cytoplasmic. Positions 543-795 (DYREIITIPG…LSVHDAVLFA (253 aa)) constitute an STAS domain. Positions 664-970 (TVSSVSQKNQ…SPEGNSNEDV (307 aa)) are interaction with RACGAP1. A compositionally biased stretch (acidic residues) spans 858–868 (SELDLELESEQ). Residues 858–970 (SELDLELESE…SPEGNSNEDV (113 aa)) are disordered. A compositionally biased stretch (basic and acidic residues) spans 877–898 (DLDRELEPEMEPKAETETKTQT). Low complexity predominate over residues 938–948 (STQSQTQTRTW).

This sequence belongs to the SLC26A/SulP transporter (TC 2.A.53) family. In terms of assembly, interacts with RACGAP1. Interacts with CFTR; stimulates anion transport activity of CFTR. N-glycosylated. In terms of tissue distribution, expression observed exclusively in testis, restricted to the meiotic phase of the germ cell. Abundant expression located in the seminiferous tubules, concentrated on the luminal side of the tubuli harboring the spermatocytes and spermatids.

It localises to the membrane. It carries out the reaction sulfate(out) + chloride(in) = sulfate(in) + chloride(out). The catalysed reaction is oxalate(in) + chloride(out) = oxalate(out) + chloride(in). With respect to regulation, activity is inhibited by 4,4'-Di-isothiocyanatostilbene-2,2'-disulfonic acid (DIDS - an inhibitor of several anion channels and transporters) and gluconate. Antiporter that mediates the exchange of sulfate and oxalate against chloride ions across a membrane. Stimulates anion transport activity of CFTR. May cooperate with CFTR in the regulation of chloride and bicarbonate ions fluxes required for activation of the ADCY10/PKA pathway during sperm motility and sperm capacitation. May play a role in sperm tail differentiation and motility and hence male fertility. The chain is Testis anion transporter 1 from Homo sapiens (Human).